Reading from the N-terminus, the 147-residue chain is D-aminoacyl-tRNA deacylase (147 aa).

The Gly-cisPro motif, important for rejection of L-amino acids motif lies at 136 to 137 (GP).

It belongs to the DTD family. Homodimer.

The protein resides in the cytoplasm. The enzyme catalyses glycyl-tRNA(Ala) + H2O = tRNA(Ala) + glycine + H(+). It carries out the reaction a D-aminoacyl-tRNA + H2O = a tRNA + a D-alpha-amino acid + H(+). Its function is as follows. An aminoacyl-tRNA editing enzyme that deacylates mischarged D-aminoacyl-tRNAs. Also deacylates mischarged glycyl-tRNA(Ala), protecting cells against glycine mischarging by AlaRS. Acts via tRNA-based rather than protein-based catalysis; rejects L-amino acids rather than detecting D-amino acids in the active site. By recycling D-aminoacyl-tRNA to D-amino acids and free tRNA molecules, this enzyme counteracts the toxicity associated with the formation of D-aminoacyl-tRNA entities in vivo and helps enforce protein L-homochirality. In Sulfurihydrogenibium sp. (strain YO3AOP1), this protein is D-aminoacyl-tRNA deacylase.